The following is a 349-amino-acid chain: Fructose-1,6-bisphosphatase class 1 (349 aa).

Residues E91, D110, L112, and D113 each coordinate Mg(2+). Substrate-binding positions include 113–116 and N205; that span reads DGSS. Residue E277 coordinates Mg(2+).

The protein belongs to the FBPase class 1 family. As to quaternary structure, homotetramer. Mg(2+) is required as a cofactor.

The protein localises to the cytoplasm. The enzyme catalyses beta-D-fructose 1,6-bisphosphate + H2O = beta-D-fructose 6-phosphate + phosphate. It functions in the pathway carbohydrate biosynthesis; gluconeogenesis. The polypeptide is Fructose-1,6-bisphosphatase class 1 (Sinorhizobium medicae (strain WSM419) (Ensifer medicae)).